The chain runs to 314 residues: Probable carboxylesterase 2 (314 aa).

The Involved in the stabilization of the negatively charged intermediate by the formation of the oxyanion hole signature appears at histidine 79–glycine 81. Catalysis depends on residues serine 158, aspartate 254, and histidine 286.

It belongs to the 'GDXG' lipolytic enzyme family. Expressed in roots and flowers.

It carries out the reaction a carboxylic ester + H2O = an alcohol + a carboxylate + H(+). Carboxylesterase acting on esters with varying acyl chain length. The chain is Probable carboxylesterase 2 (CXE2) from Arabidopsis thaliana (Mouse-ear cress).